A 233-amino-acid polypeptide reads, in one-letter code: 2,3,4,5-tetrahydropyridine-2,6-dicarboxylate N-acetyltransferase (233 aa).

This sequence belongs to the transferase hexapeptide repeat family. DapH subfamily.

It carries out the reaction (S)-2,3,4,5-tetrahydrodipicolinate + acetyl-CoA + H2O = L-2-acetamido-6-oxoheptanedioate + CoA. The protein operates within amino-acid biosynthesis; L-lysine biosynthesis via DAP pathway; LL-2,6-diaminopimelate from (S)-tetrahydrodipicolinate (acetylase route): step 1/3. Functionally, catalyzes the transfer of an acetyl group from acetyl-CoA to tetrahydrodipicolinate. This chain is 2,3,4,5-tetrahydropyridine-2,6-dicarboxylate N-acetyltransferase, found in Oenococcus oeni (strain ATCC BAA-331 / PSU-1).